The primary structure comprises 454 residues: Growth/differentiation factor 9 (454 aa).

A signal peptide spans 1 to 24; that stretch reads MARPNKFLLWFCCFAWLCFPISLG. Positions 25 to 319 are excised as a propeptide; the sequence is SQASGGEAQI…GRSSHHRHRR (295 aa). Residues Asn-106, Asn-163, Asn-236, Asn-255, and Asn-268 are each glycosylated (N-linked (GlcNAc...) asparagine). The tract at residues 303–330 is disordered; it reads GEEAAEDGRSSHHRHRRGQETVSSELKK. Ser-325 is subject to Phosphoserine; by CK. A glycan (N-linked (GlcNAc...) asparagine) is linked at Asn-338. Intrachain disulfides connect Cys-353–Cys-419, Cys-382–Cys-451, and Cys-386–Cys-453.

The protein belongs to the TGF-beta family. As to quaternary structure, homodimer or heterodimer (Potential). But, in contrast to other members of this family, cannot be disulfide-linked. Phosphorylated; phosphorylation is critical for GDF9 function. In vitro, can be phosphorylated by CK at Ser-325. Expressed in ovarian granulosa cells. Present in oocytes of primary follicles (at protein level).

The protein resides in the secreted. Functionally, required for ovarian folliculogenesis. Promotes primordial follicle development. Stimulates granulosa cell proliferation. Promotes cell transition from G0/G1 to S and G2/M phases, through an increase of CCND1 and CCNE1 expression, and RB1 phosphorylation. It regulates STAR expression and cAMP-dependent progesterone release in granulosa and thecal cells. Attenuates the suppressive effects of activin A on STAR expression and progesterone production by increasing the expression of inhibin B. It suppresses FST and FSTL3 production in granulosa-lutein cells. The chain is Growth/differentiation factor 9 (GDF9) from Homo sapiens (Human).